Consider the following 469-residue polypeptide: MTSQLHKKGEAWSARFSEPMSELVKRYTSSVFFDKRLALVDIAGSLAHANMLAAQKIISADDLAAIERGMAQIKGEIERGEFEWQLDLEDVHLNIEARLTALIGDAGKRLHTGRSRNDQVATDIRLWLRGEIDRIGGLLNDLRGALIDLAEQNADTIMPGFTHLQVAQPVTFGHHLLAYVEMFTRDAERMRDCRTRVNRLPLGAAALAGTSYSIDRHAVAKTLGFDGICANSLDAVSDRDFAIEFTAASALVMTHVSRFSEELVLWMSPRVGFIDIADRFCTGSSIMPQKKNPDVPELARGKTGRVNGHLMALLTLMKGQPLAYNKDNQEDKEPLFDTVDTVADTLRIFAEMAAGITVKPDAMRAAALQGFSTATDLADYLVKRGLPFRDAHEAVAHAVKICDDRGIDLADLTLDEMKQELPNVAHLIGDDVFGYLTLEGSVASRNHPGGTAPDQVRAAVKAARAALAK.

The protein belongs to the lyase 1 family. Argininosuccinate lyase subfamily.

It localises to the cytoplasm. The catalysed reaction is 2-(N(omega)-L-arginino)succinate = fumarate + L-arginine. It participates in amino-acid biosynthesis; L-arginine biosynthesis; L-arginine from L-ornithine and carbamoyl phosphate: step 3/3. This is Argininosuccinate lyase from Burkholderia orbicola (strain MC0-3).